The primary structure comprises 159 residues: 2-C-methyl-D-erythritol 2,4-cyclodiphosphate synthase (159 aa).

A divalent metal cation contacts are provided by aspartate 8 and histidine 10. Residues 8–10 and 34–35 contribute to the 4-CDP-2-C-methyl-D-erythritol 2-phosphate site; these read DVH and HS. Residue histidine 42 coordinates a divalent metal cation. 4-CDP-2-C-methyl-D-erythritol 2-phosphate is bound by residues 56-58, 61-65, 100-106, 132-135, phenylalanine 139, and arginine 142; these read DIG, FPDTD, AQAPKMA, and TTSE.

The protein belongs to the IspF family. As to quaternary structure, homotrimer. The cofactor is a divalent metal cation.

It carries out the reaction 4-CDP-2-C-methyl-D-erythritol 2-phosphate = 2-C-methyl-D-erythritol 2,4-cyclic diphosphate + CMP. Its pathway is isoprenoid biosynthesis; isopentenyl diphosphate biosynthesis via DXP pathway; isopentenyl diphosphate from 1-deoxy-D-xylulose 5-phosphate: step 4/6. In terms of biological role, involved in the biosynthesis of isopentenyl diphosphate (IPP) and dimethylallyl diphosphate (DMAPP), two major building blocks of isoprenoid compounds. Catalyzes the conversion of 4-diphosphocytidyl-2-C-methyl-D-erythritol 2-phosphate (CDP-ME2P) to 2-C-methyl-D-erythritol 2,4-cyclodiphosphate (ME-CPP) with a corresponding release of cytidine 5-monophosphate (CMP). The chain is 2-C-methyl-D-erythritol 2,4-cyclodiphosphate synthase from Aliivibrio salmonicida (strain LFI1238) (Vibrio salmonicida (strain LFI1238)).